The following is a 272-amino-acid chain: Adenylate kinase (272 aa).

Position 55-60 (55-60 (GAGKGT)) interacts with ATP. Residues 75-104 (ATGDMLRSQVAKKTPLGKEAKKIMDQGGLV) are NMP. Residues Thr-76, Arg-81, 102-104 (GLV), 131-134 (GFPR), and Gln-138 contribute to the AMP site. The tract at residues 172 to 209 (GRLVHPASGRSYHKIFNPPKQDMKDDITGEPLIQRSDD) is LID. ATP-binding positions include Arg-173 and 182–183 (SY). Positions 206 and 217 each coordinate AMP. Residue Gln-245 coordinates ATP.

Belongs to the adenylate kinase family. AK2 subfamily. As to quaternary structure, monomer.

It localises to the cytoplasm. Its subcellular location is the cytosol. It is found in the mitochondrion intermembrane space. The enzyme catalyses AMP + ATP = 2 ADP. Catalyzes the reversible transfer of the terminal phosphate group between ATP and AMP. Plays an important role in cellular energy homeostasis and in adenine nucleotide metabolism. Adenylate kinase activity is critical for regulation of the phosphate utilization and the AMP de novo biosynthesis pathways. The sequence is that of Adenylate kinase (adk1) from Talaromyces marneffei (Penicillium marneffei).